A 198-amino-acid polypeptide reads, in one-letter code: Recombination protein RecR (198 aa).

Residues 57 to 72 (CRQCRTLSEEELCPQC) form a C4-type zinc finger. One can recognise a Toprim domain in the interval 80-174 (SLLCVVEGPL…TLSRIAHGVP (95 aa)).

The protein belongs to the RecR family.

In terms of biological role, may play a role in DNA repair. It seems to be involved in an RecBC-independent recombinational process of DNA repair. It may act with RecF and RecO. The sequence is that of Recombination protein RecR from Pseudomonas paraeruginosa (strain DSM 24068 / PA7) (Pseudomonas aeruginosa (strain PA7)).